A 51-amino-acid chain; its full sequence is Nawaprin (51 aa).

Positions 1-50 (NEKSGSCPDMSMPIPPLGICKTLCNSDSGCPNVQKCCKNGCGFMTCTTPV) constitute a WAP domain. Intrachain disulfides connect Cys-7–Cys-37, Cys-20–Cys-41, Cys-24–Cys-36, and Cys-30–Cys-46.

In terms of tissue distribution, expressed by the venom gland.

The protein resides in the secreted. In terms of biological role, damages membranes of susceptible bacteria. Has no hemolytic activity. Not toxic to mice. Does not inhibit the proteinases elastase and cathepsin G. This is Nawaprin from Naja nigricollis (Black-necked spitting cobra).